Reading from the N-terminus, the 294-residue chain is Factor associated with metabolism and energy (294 aa).

Over residues M1–V12 the composition is skewed to basic residues. Disordered stretches follow at residues M1–T28 and F255–T279. Residue G2 is the site of N-myristoyl glycine attachment. Polar residues predominate over residues P17 to T28. Over residues K268–T279 the composition is skewed to basic and acidic residues.

As to expression, expressed in proximal tubules of the kidney.

It is found in the cell membrane. The protein localises to the cytoplasmic vesicle. May be involved in tuning the metabolism, energy expenditure, and excretion processes. This is Factor associated with metabolism and energy from Mus musculus (Mouse).